Here is a 288-residue protein sequence, read N- to C-terminus: 4-hydroxy-tetrahydrodipicolinate synthase (288 aa).

Threonine 42 contributes to the pyruvate binding site. The active-site Proton donor/acceptor is the tyrosine 129. Catalysis depends on lysine 158, which acts as the Schiff-base intermediate with substrate. Isoleucine 200 is a binding site for pyruvate.

Belongs to the DapA family. Homotetramer; dimer of dimers.

It is found in the cytoplasm. The enzyme catalyses L-aspartate 4-semialdehyde + pyruvate = (2S,4S)-4-hydroxy-2,3,4,5-tetrahydrodipicolinate + H2O + H(+). The protein operates within amino-acid biosynthesis; L-lysine biosynthesis via DAP pathway; (S)-tetrahydrodipicolinate from L-aspartate: step 3/4. Functionally, catalyzes the condensation of (S)-aspartate-beta-semialdehyde [(S)-ASA] and pyruvate to 4-hydroxy-tetrahydrodipicolinate (HTPA). The sequence is that of 4-hydroxy-tetrahydrodipicolinate synthase from Thermosipho melanesiensis (strain DSM 12029 / CIP 104789 / BI429).